The chain runs to 177 residues: Large ribosomal subunit protein uL6 (177 aa).

It belongs to the universal ribosomal protein uL6 family. Part of the 50S ribosomal subunit.

In terms of biological role, this protein binds to the 23S rRNA, and is important in its secondary structure. It is located near the subunit interface in the base of the L7/L12 stalk, and near the tRNA binding site of the peptidyltransferase center. The protein is Large ribosomal subunit protein uL6 of Mesorhizobium japonicum (strain LMG 29417 / CECT 9101 / MAFF 303099) (Mesorhizobium loti (strain MAFF 303099)).